We begin with the raw amino-acid sequence, 261 residues long: DNA-directed RNA polymerase subunit Rpo3 (261 aa).

It belongs to the archaeal Rpo3/eukaryotic RPB3 RNA polymerase subunit family. As to quaternary structure, part of the RNA polymerase complex.

The protein localises to the cytoplasm. It carries out the reaction RNA(n) + a ribonucleoside 5'-triphosphate = RNA(n+1) + diphosphate. Functionally, DNA-dependent RNA polymerase (RNAP) catalyzes the transcription of DNA into RNA using the four ribonucleoside triphosphates as substrates. This Pyrococcus furiosus (strain ATCC 43587 / DSM 3638 / JCM 8422 / Vc1) protein is DNA-directed RNA polymerase subunit Rpo3.